Reading from the N-terminus, the 224-residue chain is Cytidylate kinase (224 aa).

ATP is bound at residue 11-19; the sequence is GPAAAGKST.

The protein belongs to the cytidylate kinase family. Type 1 subfamily.

It localises to the cytoplasm. It catalyses the reaction CMP + ATP = CDP + ADP. The catalysed reaction is dCMP + ATP = dCDP + ADP. This is Cytidylate kinase from Listeria innocua serovar 6a (strain ATCC BAA-680 / CLIP 11262).